The sequence spans 185 residues: Large ribosomal subunit protein bL17 (185 aa).

This sequence belongs to the bacterial ribosomal protein bL17 family. Part of the 50S ribosomal subunit. Contacts protein L32.

The protein is Large ribosomal subunit protein bL17 of Rhodococcus erythropolis (strain PR4 / NBRC 100887).